The sequence spans 249 residues: Probable transcriptional regulatory protein aq_1575 (249 aa).

The protein belongs to the TACO1 family.

The protein localises to the cytoplasm. This chain is Probable transcriptional regulatory protein aq_1575, found in Aquifex aeolicus (strain VF5).